The sequence spans 561 residues: Liver carboxylesterase 1F (561 aa).

Residues 1–18 (MCLSFLFLVSLATCVVYG) form the signal peptide. N-linked (GlcNAc...) asparagine glycosylation is present at N79. A disulfide bridge links C87 with C116. The active-site Acyl-ester intermediate is the S221. A disulfide bridge connects residues C273 and C284. Residues E353 and H466 each act as charge relay system in the active site. The short motif at 558 to 561 (HNEL) is the Prevents secretion from ER element.

The protein belongs to the type-B carboxylesterase/lipase family. In terms of tissue distribution, expressed in liver and kidney.

It localises to the lipid droplet. Its subcellular location is the cytoplasm. The protein resides in the cytosol. It is found in the endoplasmic reticulum. The protein localises to the microsome. The catalysed reaction is a carboxylic ester + H2O = an alcohol + a carboxylate + H(+). It carries out the reaction all-trans-retinyl hexadecanoate + H2O = all-trans-retinol + hexadecanoate + H(+). Involved in the detoxification of xenobiotics and in the activation of ester and amide prodrugs. Hydrolyzes retinyl esters. Hydrolyzes p-nitrophenyl butyrate (PNPB), triacylglycerol and monoacylglycerol. Shows higher activity against PNPB, a short-chain fatty acid ester, than against triolein, a long-chain fatty acid ester. Shows no detectable activity against diacylglycerol, cholesterol ester or phospholipids. May play a role in adipocyte lipolysis. The sequence is that of Liver carboxylesterase 1F from Rattus norvegicus (Rat).